Consider the following 804-residue polypeptide: uncharacterized protein (804 aa).

This is an uncharacterized protein from Methanothermobacter marburgensis (strain ATCC BAA-927 / DSM 2133 / JCM 14651 / NBRC 100331 / OCM 82 / Marburg) (Methanobacterium thermoautotrophicum).